The primary structure comprises 30 residues: Peptidase 1 (30 aa).

It belongs to the peptidase C1 family.

The protein resides in the secreted. It carries out the reaction Broad endopeptidase specificity.. Functionally, thiol protease that hydrolyzes proteins, with a preference for Phe or basic residues. The sequence is that of Peptidase 1 (DERM1) from Dermatophagoides microceras (House dust mite).